Reading from the N-terminus, the 274-residue chain is Large ribosomal subunit protein uL2 (274 aa).

Disordered stretches follow at residues 28–54 and 224–274; these read APHA…TRHI and VAMN…RRRK. Positions 263–274 are enriched in basic and acidic residues; sequence KRTDKMIVRRRK.

It belongs to the universal ribosomal protein uL2 family. Part of the 50S ribosomal subunit. Forms a bridge to the 30S subunit in the 70S ribosome.

Its function is as follows. One of the primary rRNA binding proteins. Required for association of the 30S and 50S subunits to form the 70S ribosome, for tRNA binding and peptide bond formation. It has been suggested to have peptidyltransferase activity; this is somewhat controversial. Makes several contacts with the 16S rRNA in the 70S ribosome. The chain is Large ribosomal subunit protein uL2 from Pseudomonas fluorescens (strain SBW25).